The following is a 292-amino-acid chain: MSMACTKVWRSTMYTPRRLKRTTPASRVSSTAMAAANGDASHGANGGIQIQSKEMKTAIHSNDSPKTLLKSESLHEYMLNTMVYPRENEFMRELRLITSEHTYGFMSSPPEEGQLLSLLLNLTGAKNTIEVGVFTGCSVLATALAIPDDGKVVAIDVSREYFDLGLPVIKKAGVAHKVDFREGAAMPILDNLLANEENEGKFDFAFVDADKGNYGEYHERLLRLVRAGGVLAYDNTLWGGSVALEDDSVLEEFDQDIRRSIVAFNAKIAGDPRVEAVQLPVSDGITLCRRLV.

Residues 21 to 46 (RTTPASRVSSTAMAAANGDASHGANG) form a disordered region. Over residues 23-32 (TPASRVSSTA) the composition is skewed to polar residues. Residues S108, E130, 132-133 (GV), S138, D156, and A185 contribute to the S-adenosyl-L-methionine site. A divalent metal cation is bound at residue D208. Residue D210 participates in S-adenosyl-L-methionine binding. Positions 234 and 235 each coordinate a divalent metal cation.

It belongs to the class I-like SAM-binding methyltransferase superfamily. Cation-dependent O-methyltransferase family. CCoAMT subfamily. The cofactor is Mg(2+). Mn(2+) is required as a cofactor. In terms of tissue distribution, expressed in stems only.

The enzyme catalyses tricetin + 2 S-adenosyl-L-methionine = 3',5'-di-O-methyltricetin + 2 S-adenosyl-L-homocysteine + 2 H(+). Functionally, catalyzes the stepwise methylation of tricetin to its 3'-mono- and 3',5'-dimethyl ethers. No 3',4',5'-trimethylated ester derivatives are produced. Can use caffeoyl CoA, 5-hydroxyferulic acid, luteolin, tricetin, quercetin, myrcetin and 7,8-dihydroxyflavone as substrates, but not naringenin, apigenin or kaempferol. The 2,3-double bond and the O-dihydroxyl group of the substrate are both required for catalytic activity of the enzyme. The protein is Tricin synthase 2 (ROMT-17) of Oryza sativa subsp. japonica (Rice).